The primary structure comprises 138 residues: MATRTQARGAVVELLYAFESGNEEIKKIASSMLEEKKIKNNQLAFALSLFNGVLEKINEIDALIEPHLKDWDFKRLGSMEKAILRLGAYEIGFTPTQNPIIINECIELGKLYAEPNTPKFLNAILDSLSKKLTQKPLN.

This sequence belongs to the NusB family.

In terms of biological role, involved in transcription antitermination. Required for transcription of ribosomal RNA (rRNA) genes. Binds specifically to the boxA antiterminator sequence of the ribosomal RNA (rrn) operons. The sequence is that of Transcription antitermination protein NusB from Helicobacter pylori (strain ATCC 700392 / 26695) (Campylobacter pylori).